The chain runs to 183 residues: ATP-dependent protease subunit HslV (183 aa).

Residue Thr13 is part of the active site. Na(+)-binding residues include Gly168, Cys171, and Thr174.

This sequence belongs to the peptidase T1B family. HslV subfamily. As to quaternary structure, a double ring-shaped homohexamer of HslV is capped on each side by a ring-shaped HslU homohexamer. The assembly of the HslU/HslV complex is dependent on binding of ATP.

Its subcellular location is the cytoplasm. The catalysed reaction is ATP-dependent cleavage of peptide bonds with broad specificity.. With respect to regulation, allosterically activated by HslU binding. In terms of biological role, protease subunit of a proteasome-like degradation complex believed to be a general protein degrading machinery. The protein is ATP-dependent protease subunit HslV of Xylella fastidiosa (strain M23).